A 1500-amino-acid polypeptide reads, in one-letter code: DNA-directed RNA polymerase subunit beta' (1500 aa).

C60, C62, C75, and C78 together coordinate Zn(2+). A disordered region spans residues 180 to 199 (DLGGMETAQRSTQRQIEEDY). Mg(2+) contacts are provided by D626, D628, and D630. Positions 1002, 1075, 1082, and 1085 each coordinate Zn(2+). Residues 1440–1500 (EVQQAEKSAE…DSDHPDLSSL (61 aa)) form a disordered region. Polar residues predominate over residues 1449–1468 (EPTTTALPTTNGHQAPQSDT).

Belongs to the RNA polymerase beta' chain family. The RNAP catalytic core consists of 2 alpha, 1 beta, 1 beta' and 1 omega subunit. When a sigma factor is associated with the core the holoenzyme is formed, which can initiate transcription. Mg(2+) is required as a cofactor. It depends on Zn(2+) as a cofactor.

It carries out the reaction RNA(n) + a ribonucleoside 5'-triphosphate = RNA(n+1) + diphosphate. In terms of biological role, DNA-dependent RNA polymerase catalyzes the transcription of DNA into RNA using the four ribonucleoside triphosphates as substrates. In Chloroflexus aggregans (strain MD-66 / DSM 9485), this protein is DNA-directed RNA polymerase subunit beta'.